A 310-amino-acid chain; its full sequence is HPr kinase/phosphorylase (310 aa).

Residues His-138 and Lys-159 contribute to the active site. Residue Gly-153–Ser-160 coordinates ATP. Ser-160 lines the Mg(2+) pocket. The active-site Proton acceptor; for phosphorylation activity. Proton donor; for dephosphorylation activity is the Asp-177. Positions Ile-201 to Asp-210 are important for the catalytic mechanism of both phosphorylation and dephosphorylation. Glu-202 contacts Mg(2+). The active site involves Arg-243. Residues Pro-264–Arg-269 are important for the catalytic mechanism of dephosphorylation.

The protein belongs to the HPrK/P family. In terms of assembly, homohexamer. Mg(2+) serves as cofactor.

It carries out the reaction [HPr protein]-L-serine + ATP = [HPr protein]-O-phospho-L-serine + ADP + H(+). The enzyme catalyses [HPr protein]-O-phospho-L-serine + phosphate + H(+) = [HPr protein]-L-serine + diphosphate. Catalyzes the ATP- as well as the pyrophosphate-dependent phosphorylation of a specific serine residue in HPr, a phosphocarrier protein of the phosphoenolpyruvate-dependent sugar phosphotransferase system (PTS). HprK/P also catalyzes the pyrophosphate-producing, inorganic phosphate-dependent dephosphorylation (phosphorolysis) of seryl-phosphorylated HPr (P-Ser-HPr). The two antagonistic activities of HprK/P are regulated by several intracellular metabolites, which change their concentration in response to the absence or presence of rapidly metabolisable carbon sources (glucose, fructose, etc.) in the growth medium. Therefore, by controlling the phosphorylation state of HPr, HPrK/P is a sensor enzyme that plays a major role in the regulation of carbon metabolism and sugar transport: it mediates carbon catabolite repression (CCR), and regulates PTS-catalyzed carbohydrate uptake and inducer exclusion. The polypeptide is HPr kinase/phosphorylase (Lactococcus lactis subsp. cremoris (strain SK11)).